The chain runs to 72 residues: MTEKPNHEELGSKSIFYDPEWNPKGLAPPGFKNVAYNPATFTRKQSSLQRHMLGINADLPEEKKRMNKNGRE.

This sequence belongs to the AIM4 family.

The protein resides in the cytoplasm. This chain is Altered inheritance of mitochondria protein 4 (AIM4), found in Zygosaccharomyces rouxii (strain ATCC 2623 / CBS 732 / NBRC 1130 / NCYC 568 / NRRL Y-229).